Here is an 897-residue protein sequence, read N- to C-terminus: Echinoderm microtubule-associated protein-like 3 (897 aa).

The residue at position 1 (Met-1) is an N-acetylmethionine. Positions 16 to 43 (LQTLSQRLRVQEEEMELVKAALAEALRL) form a coiled coil. The segment covering 51-68 (TTLQGSGISAPTRNSSIT) has biased composition (polar residues). Residues 51-210 (TTLQGSGISA…GGPGSRRSNY (160 aa)) are disordered. Low complexity-rich tracts occupy residues 96–108 (PSSG…NGPP), 118–132 (SGTQ…SSGA), and 155–164 (RNSSSSSSPS). The segment covering 175-190 (AASSANLLLRSGSTES) has biased composition (polar residues). 3 positions are modified to phosphoserine: Ser-177, Ser-199, and Ser-205. WD repeat units follow at residues 235–287 (RSLE…LYRP), 296–345 (GGGQ…IWDS), 351–393 (LQEI…VWDC), 399–435 (LAEI…FWNW), 449–488 (RKQG…TWGR), 505–544 (YTIV…QWGP), 550–585 (QEAE…LRGD), 590–627 (FSPV…LWDG), 630–668 (HALA…VLDT), 675–710 (SDVT…IYSV), 717–756 (SSRF…YWDV), 766–824 (RYES…LFQY), and 831–870 (APSR…QWRV). The segment at 876 to 897 (SGPAPATPSRTPSLSPASSLDV) is disordered. Thr-882 bears the Phosphothreonine; by CDK1 mark. The span at 883–897 (PSRTPSLSPASSLDV) shows a compositional bias: polar residues. Ser-884 is modified (phosphoserine).

The protein belongs to the WD repeat EMAP family. In terms of assembly, homotrimer; self-association is mediated by the N-terminal coiled coil. Interacts with EML2 but not with EML1. Interacts (phosphorylated at Thr-882) with TUBG1, HAUS1, HAUS2, HAUS3, HAUS4, HAUS5, HAUS6, HAUS7 and HAUS8. Post-translationally, phosphorylation at Thr-882 during mitosis is required for interaction with TUBG1, HAUS1, HAUS2, HAUS3, HAUS4, HAUS5, HAUS6, HAUS7 and HAUS8 and their recruitment to spindle microtubules.

It localises to the cytoplasm. The protein resides in the cytoskeleton. The protein localises to the nucleus. Its subcellular location is the midbody. It is found in the spindle. Its function is as follows. Regulates mitotic spindle assembly, microtubule (MT)-kinetochore attachment and chromosome separation via recruitment of HAUS augmin-like complex and TUBG1 to the existing MTs and promoting MT-based MT nucleation. Required for proper alignnment of chromosomes during metaphase. This chain is Echinoderm microtubule-associated protein-like 3 (Eml3), found in Mus musculus (Mouse).